Here is a 316-residue protein sequence, read N- to C-terminus: Rhomboid-related protein 4 (316 aa).

At 1 to 21 (MQRRTRGIDTGLLLLLSQVFH) the chain is on the cytoplasmic side. The helical transmembrane segment at 22-42 (IGINNIPPVTLATLAVNVWFF) threads the bilayer. Topologically, residues 43-103 (LNPWKPLYHS…KLEKRLGSRW (61 aa)) are extracellular. The chain crosses the membrane as a helical span at residues 104-124 (FAYIIATFSLLTGVVYLLLQF). The Cytoplasmic segment spans residues 125–137 (ASAELMNQPDFKR). A helical membrane pass occupies residues 138–154 (NCAVGFSGVLFALKVLS). Ser-144 (nucleophile) is an active-site residue. Residues 155-182 (NHYCPGGFVNILGFPVPNRFACWAELAA) are Extracellular-facing. A helical membrane pass occupies residues 183 to 203 (IHFCTPGTSFAGHLAGILVGL). The active site involves His-195. The Cytoplasmic segment spans residues 204-316 (MYTQGPLKKI…RQRLHRFDGQ (113 aa)). Positions 269–284 (SEEEQLERALRASIWD) are ubiquitin-binding domain (UBD). The interval 301-316 (PEEEMRRQRLHRFDGQ) is VCP/p97-interacting motif (VIM).

It belongs to the peptidase S54 family. Interacts with BIK and STEAP3. Interacts (via C-terminal domain) with VCP. Interacts with ubiquitin and ubiquitinated proteins. In terms of tissue distribution, expressed in intestine, lung, brain, kidney, epididymis and testis.

It localises to the endoplasmic reticulum membrane. It is found in the mitochondrion membrane. The enzyme catalyses Cleaves type-1 transmembrane domains using a catalytic dyad composed of serine and histidine that are contributed by different transmembrane domains.. Its activity is regulated as follows. Inhibited by aprotinin. Functionally, intramembrane-cleaving serine protease that cleaves single transmembrane or multi-pass membrane proteins in the hydrophobic plane of the membrane, luminal loops and juxtamembrane regions. Involved in regulated intramembrane proteolysis and the subsequent release of functional polypeptides from their membrane anchors. Functional component of endoplasmic reticulum-associated degradation (ERAD) for misfolded membrane proteins. Required for the degradation process of some specific misfolded endoplasmic reticulum (ER) luminal proteins. Participates in the transfer of misfolded proteins from the ER to the cytosol, where they are destroyed by the proteasome in a ubiquitin-dependent manner. Functions in BIK, MPZ, PKD1, PTCRA, RHO, STEAP3 and TRAC processing. Involved in the regulation of exosomal secretion; inhibits the TSAP6-mediated secretion pathway. Involved in the regulation of apoptosis; modulates BIK-mediated apoptotic activity. Also plays a role in the regulation of spermatogenesis; inhibits apoptotic activity in spermatogonia. This chain is Rhomboid-related protein 4 (Rhbdd1), found in Rattus norvegicus (Rat).